The following is a 464-amino-acid chain: MSTDKTNQSWGGRFSEPVDAFVARFTASVTFDQRLYRHDIMGSIAHATMLAKVGVLTDAERDSIIDGLKTIQGEIEAGQFDWRVDLEDVHMNIEARLTDRIGVTGKKLHTGRSRNDQVATDIRLWLRDEIDLILSEITRLQKGLLEQAEREAASIMPGFTHLQTAQPVTFGHHMLAWFEMLSRDYERLVDCRKRTNRMPLGSAALAGTTYPIDREYTAQLLGFDAVGGNSLDNVSDRDFAIEFCSAASIAMMHLSRFSEELVLWTSAQFQFIDLPDRFCTGSSIMPQKKNPDVPELVRGKTGRVFGALMGLLTLMKGQPLAYNKDNQEDKEPLFDAADTLRDSLRAFADMIPAIKPKHAIMREAALRGFSTATDLADYLVRRGLPFRDCHEIVGHAVKYGVDTGKDLAEMSLEELRQFSDQIEQDVFAVLTLEGSVNARDHIGGTAPAQVKAAVVRGQALIASR.

This sequence belongs to the lyase 1 family. Argininosuccinate lyase subfamily.

It is found in the cytoplasm. It catalyses the reaction 2-(N(omega)-L-arginino)succinate = fumarate + L-arginine. The protein operates within amino-acid biosynthesis; L-arginine biosynthesis; L-arginine from L-ornithine and carbamoyl phosphate: step 3/3. This is Argininosuccinate lyase 2 from Pseudomonas fluorescens (strain Pf0-1).